Here is a 272-residue protein sequence, read N- to C-terminus: Phosphate import ATP-binding protein PstB (272 aa).

Residues 26-267 (IVVKNWNLYY…PQVKRTEDYI (242 aa)) form the ABC transporter domain. 58–65 (GPSGCGKS) is a binding site for ATP.

Belongs to the ABC transporter superfamily. Phosphate importer (TC 3.A.1.7) family. As to quaternary structure, the complex is composed of two ATP-binding proteins (PstB), two transmembrane proteins (PstC and PstA) and a solute-binding protein (PstS).

The protein localises to the cell inner membrane. It catalyses the reaction phosphate(out) + ATP + H2O = ADP + 2 phosphate(in) + H(+). Part of the ABC transporter complex PstSACB involved in phosphate import. Responsible for energy coupling to the transport system. The polypeptide is Phosphate import ATP-binding protein PstB (Hydrogenovibrio crunogenus (strain DSM 25203 / XCL-2) (Thiomicrospira crunogena)).